A 209-amino-acid chain; its full sequence is 8-oxoguanine DNA glycosylase/AP lyase (209 aa).

Catalysis depends on residues lysine 132 and aspartate 150.

It belongs to the type-2 OGG1 family.

The catalysed reaction is 2'-deoxyribonucleotide-(2'-deoxyribose 5'-phosphate)-2'-deoxyribonucleotide-DNA = a 3'-end 2'-deoxyribonucleotide-(2,3-dehydro-2,3-deoxyribose 5'-phosphate)-DNA + a 5'-end 5'-phospho-2'-deoxyribonucleoside-DNA + H(+). Its function is as follows. Catalyzes the excision of an oxidatively damaged form of guanine (7,8-dihydro-8-oxoguanine = 8-oxoG) from DNA. Also cleaves the DNA backbone at apurinic/apyrimidinic sites (AP sites). This Picrophilus torridus (strain ATCC 700027 / DSM 9790 / JCM 10055 / NBRC 100828 / KAW 2/3) protein is 8-oxoguanine DNA glycosylase/AP lyase.